The following is a 120-amino-acid chain: UPF0231 protein YacL (120 aa).

Belongs to the UPF0231 family.

The protein is UPF0231 protein YacL of Salmonella agona (strain SL483).